We begin with the raw amino-acid sequence, 175 residues long: 3-hydroxydecanoyl-[acyl-carrier-protein] dehydratase (175 aa).

His-74 is a catalytic residue.

Belongs to the thioester dehydratase family. FabA subfamily. In terms of assembly, homodimer.

Its subcellular location is the cytoplasm. It carries out the reaction a (3R)-hydroxyacyl-[ACP] = a (2E)-enoyl-[ACP] + H2O. The catalysed reaction is (3R)-hydroxydecanoyl-[ACP] = (2E)-decenoyl-[ACP] + H2O. The enzyme catalyses (2E)-decenoyl-[ACP] = (3Z)-decenoyl-[ACP]. It participates in lipid metabolism; fatty acid biosynthesis. Functionally, necessary for the introduction of cis unsaturation into fatty acids. Catalyzes the dehydration of (3R)-3-hydroxydecanoyl-ACP to E-(2)-decenoyl-ACP and then its isomerization to Z-(3)-decenoyl-ACP. Can catalyze the dehydratase reaction for beta-hydroxyacyl-ACPs with saturated chain lengths up to 16:0, being most active on intermediate chain length. This is 3-hydroxydecanoyl-[acyl-carrier-protein] dehydratase from Alcanivorax borkumensis (strain ATCC 700651 / DSM 11573 / NCIMB 13689 / SK2).